The sequence spans 321 residues: Phospho-N-acetylmuramoyl-pentapeptide-transferase (321 aa).

Helical transmembrane passes span 1 to 21 (MIFIYAIIALLITFILVPILI), 50 to 70 (MGGLTFLISIIITSIIAIIFV), 76 to 96 (IILLLFVTIGFGLIGFIDDYI), 112 to 132 (FLAQIIIAVIFFVLSDVFHLV), 140 to 160 (IPFVNFDIPLSFAYVIFIVFW), 176 to 196 (GLATGLSIIGFAMYAVMSYML), 200 to 220 (AIGIFCIIMIFALLGFLPYNL), 225 to 245 (VFMGDTGSLALGGIFATISIM), 250 to 270 (LSLILIGFVFVVETLSVMLQV), and 300 to 320 (VVTVFWTVGLITGLIGLWIGV).

The protein belongs to the glycosyltransferase 4 family. MraY subfamily. It depends on Mg(2+) as a cofactor.

It is found in the cell membrane. The catalysed reaction is UDP-N-acetyl-alpha-D-muramoyl-L-alanyl-gamma-D-glutamyl-L-lysyl-D-alanyl-D-alanine + di-trans,octa-cis-undecaprenyl phosphate = Mur2Ac(oyl-L-Ala-gamma-D-Glu-L-Lys-D-Ala-D-Ala)-di-trans,octa-cis-undecaprenyl diphosphate + UMP. The protein operates within cell wall biogenesis; peptidoglycan biosynthesis. Its function is as follows. Catalyzes the initial step of the lipid cycle reactions in the biosynthesis of the cell wall peptidoglycan: transfers peptidoglycan precursor phospho-MurNAc-pentapeptide from UDP-MurNAc-pentapeptide onto the lipid carrier undecaprenyl phosphate, yielding undecaprenyl-pyrophosphoryl-MurNAc-pentapeptide, known as lipid I. This is Phospho-N-acetylmuramoyl-pentapeptide-transferase from Staphylococcus epidermidis (strain ATCC 35984 / DSM 28319 / BCRC 17069 / CCUG 31568 / BM 3577 / RP62A).